Here is a 304-residue protein sequence, read N- to C-terminus: Putative S-adenosyl-L-methionine-dependent methyltransferase MAP_4189c (304 aa).

S-adenosyl-L-methionine-binding positions include D130 and 159-160 (DL).

This sequence belongs to the UPF0677 family.

Its function is as follows. Exhibits S-adenosyl-L-methionine-dependent methyltransferase activity. The polypeptide is Putative S-adenosyl-L-methionine-dependent methyltransferase MAP_4189c (Mycolicibacterium paratuberculosis (strain ATCC BAA-968 / K-10) (Mycobacterium paratuberculosis)).